The sequence spans 366 residues: Type 2 DNA topoisomerase 6 subunit A (366 aa).

The Topo IIA-type catalytic domain occupies 7-146 (SDETEARDQL…FHMRPEESGA (140 aa)). The active-site O-(5'-phospho-DNA)-tyrosine intermediate is the Tyr101. Mg(2+) contacts are provided by Glu199 and Asp251.

The protein belongs to the TOP6A family. Homodimer. Heterotetramer of two Top6A and two Top6B chains. Requires Mg(2+) as cofactor.

It catalyses the reaction ATP-dependent breakage, passage and rejoining of double-stranded DNA.. Functionally, relaxes both positive and negative superturns and exhibits a strong decatenase activity. This is Type 2 DNA topoisomerase 6 subunit A from Halobacterium salinarum (strain ATCC 700922 / JCM 11081 / NRC-1) (Halobacterium halobium).